Here is a 218-residue protein sequence, read N- to C-terminus: Large ribosomal subunit protein eL13 (218 aa).

Positions 196-218 (AKRAKEAAESEDAAKGDPKKAKK) are disordered. Residues 199-218 (AKEAAESEDAAKGDPKKAKK) are compositionally biased toward basic and acidic residues.

The protein belongs to the eukaryotic ribosomal protein eL13 family. As to quaternary structure, component of the 60S large ribosomal subunit (LSU).

The protein resides in the cytoplasm. Component of the ribosome, a large ribonucleoprotein complex responsible for the synthesis of proteins in the cell. The small ribosomal subunit (SSU) binds messenger RNAs (mRNAs) and translates the encoded message by selecting cognate aminoacyl-transfer RNA (tRNA) molecules. The large subunit (LSU) contains the ribosomal catalytic site termed the peptidyl transferase center (PTC), which catalyzes the formation of peptide bonds, thereby polymerizing the amino acids delivered by tRNAs into a polypeptide chain. The nascent polypeptides leave the ribosome through a tunnel in the LSU and interact with protein factors that function in enzymatic processing, targeting, and the membrane insertion of nascent chains at the exit of the ribosomal tunnel. As part of the LSU, it is probably required for its formation and the maturation of rRNAs. In Drosophila melanogaster (Fruit fly), this protein is Large ribosomal subunit protein eL13 (RpL13).